Consider the following 1172-residue polypeptide: Phytochrome B (1172 aa).

Positions 1–16 (MVSGVGGSGGGRGGGR) are enriched in gly residues. The disordered stretch occupies residues 1 to 54 (MVSGVGGSGGGRGGGRGGEEEPSSSHTPNNRRGGEQAQSSGTKSLRPRSNTESM). The segment covering 24 to 54 (SSHTPNNRRGGEQAQSSGTKSLRPRSNTESM) has biased composition (polar residues). Residues 252–433 (DIKLLCDTVV…AFGLQLNMEL (182 aa)) form the GAF domain. Cys357 is a binding site for phytochromobilin. PAS domains are found at residues 652 to 723 (VARE…LRGD) and 786 to 857 (DYKA…MIVL). The Histidine kinase domain occupies 934–1153 (YICQVIKNPL…LIILELPVPR (220 aa)).

Belongs to the phytochrome family. As to quaternary structure, homodimer. Interacts with ADO1 and PKS4. Stabilized by interactions with PAPP5 and FYPP3 which are enhanced in the phosphorylated Pfr form. Interacts with VOZ1 and VOZ2. Binds, via its photosensory domain, to PTAC12/HMR/PAP5 when photoactivated; this interaction stimulates its localization to photobodies. Interacts with CRY1 specifically when in the dark/far-red (Pr) state, but not when red light-activated (Pfr). Interacts with PIF4 and PIF5 in response to low blue light (LBL). Component of a red light-dependent nuclear complex made of PHL, PHYB and CO. Interacts directly with PHL. Binds to UNE10/PIF8 when red light-activated (Pfr). When light-activated, interacts with PCH1 and PCHL. Associated with DRT111/RSN2/SFPS, SMP2 and SWAP1 in nuclear photobodies upon response to red light (Pfr form). Post-translationally, contains one covalently linked phytochromobilin chromophore. Expressed in fruits, flowers, leaves, stems, seedlings and roots.

Its subcellular location is the cytoplasm. The protein localises to the nucleus. The protein resides in the nucleoplasm. It localises to the nucleus speckle. Its function is as follows. Regulatory photoreceptor which exists in two forms that are reversibly interconvertible by light: the Pr form that absorbs maximally in the red region of the spectrum and the Pfr form that absorbs maximally in the far-red region. Photoconversion of Pr to Pfr induces an array of morphogenetic responses, whereas reconversion of Pfr to Pr cancels the induction of those responses. Pfr controls the expression of a number of nuclear genes including those encoding the small subunit of ribulose-bisphosphate carboxylase, chlorophyll A/B binding protein, protochlorophyllide reductase, rRNA, etc. It also controls the expression of its own gene(s) in a negative feedback fashion. Involved in the flowering time regulation. Involved in light-regulated circadian phase control that triggers stomatal aperture, stomatal conductance, and CO(2) assimilation. Implicated in red light perception, and, to a lower extent, in blue light signaling. Controls thermomorphogenesis in the daytime and regulates temperature responses by associating with the promoters of key target genes in a temperature-dependent manner and subsequently repressing their expression in a PIF4-dependent manner (temperature-responsive transcriptional regulator); this process requires PTAC12/HMR/PAP5 (transcriptional activator). Thermal timer that integrates temperature information over the course of the night. Detabilizes UNE10/PIF8 in red light. In Arabidopsis thaliana (Mouse-ear cress), this protein is Phytochrome B.